The following is a 381-amino-acid chain: Cobalt-precorrin-5B C(1)-methyltransferase (381 aa).

It belongs to the CbiD family.

It carries out the reaction Co-precorrin-5B + S-adenosyl-L-methionine = Co-precorrin-6A + S-adenosyl-L-homocysteine. It participates in cofactor biosynthesis; adenosylcobalamin biosynthesis; cob(II)yrinate a,c-diamide from sirohydrochlorin (anaerobic route): step 6/10. Catalyzes the methylation of C-1 in cobalt-precorrin-5B to form cobalt-precorrin-6A. This is Cobalt-precorrin-5B C(1)-methyltransferase from Prochlorococcus marinus (strain NATL2A).